The chain runs to 934 residues: ATP-dependent RNA helicase dbp-10 (934 aa).

The interval 21-43 is disordered; the sequence is LFNNDSDFEDNSSKHHTKKGAVT. Residues 99–127 carry the Q motif motif; the sequence is GGFQAMGLNAHLLRAITRKGFSVPTPIQR. The 173-residue stretch at 130–302 folds into the Helicase ATP-binding domain; it reads IPLILERKDV…RAGLQEPSLV (173 aa). Residue 143-150 coordinates ATP; that stretch reads ARTGSGKT. The short motif at 250 to 253 is the DEAD box element; sequence DEAD. 3 disordered regions span residues 343–370, 613–722, and 851–934; these read GPPEGTKEESDELQARKRKREYRPNPKE, ELGP…FQDP, and GAQP…RQKR. A Helicase C-terminal domain is found at 359–513; that stretch reads KRKREYRPNP…KNPSFAADVV (155 aa). Composition is skewed to acidic residues over residues 644–654 and 662–700; these read DEDDEDVDMED and EETNAFEDFEDEEEEGEAEEAEEAEAKEDPYADDSDSEM. A compositionally biased stretch (basic and acidic residues) spans 864-926; the sequence is EKAPKDADKF…VAEKKREKNA (63 aa).

It belongs to the DEAD box helicase family. DDX54/DBP10 subfamily.

Its subcellular location is the nucleus. It is found in the nucleolus. The catalysed reaction is ATP + H2O = ADP + phosphate + H(+). Its function is as follows. ATP-binding RNA helicase involved in the biogenesis of 60S ribosomal subunits and is required for the normal formation of 25S and 5.8S rRNAs. The polypeptide is ATP-dependent RNA helicase dbp-10 (dbp-10) (Neurospora crassa (strain ATCC 24698 / 74-OR23-1A / CBS 708.71 / DSM 1257 / FGSC 987)).